Reading from the N-terminus, the 443-residue chain is Threonine/serine transporter TdcC (443 aa).

11 helical membrane passes run 22–42 (TTWT…FFPI), 44–64 (AGFG…PIAF), 97–117 (GVVI…IYGV), 140–160 (FVAL…KDLM), 163–183 (VMSY…LSLI), 207–227 (ILVT…FSPI), 259–279 (ASML…FTLS), 319–339 (ASII…LGTL), 366–386 (ISMI…PNIL), 389–409 (IEAM…MYAI), and 423–443 (DNVF…YKLF).

This sequence belongs to the amino acid/polyamine transporter 2 family. SdaC/TdcC subfamily.

It is found in the cell inner membrane. The catalysed reaction is L-threonine(in) + H(+)(in) = L-threonine(out) + H(+)(out). The enzyme catalyses L-serine(in) + H(+)(in) = L-serine(out) + H(+)(out). Functionally, involved in the import of threonine and serine into the cell, with the concomitant import of a proton (symport system). In Salmonella newport (strain SL254), this protein is Threonine/serine transporter TdcC.